A 480-amino-acid chain; its full sequence is Protein nucleotidyltransferase YdiU (480 aa).

ATP contacts are provided by G86, G88, R89, K109, D121, G122, R172, and R179. Catalysis depends on D248, which acts as the Proton acceptor. Mg(2+) is bound by residues N249 and D258. D258 provides a ligand contact to ATP.

Belongs to the SELO family. Requires Mg(2+) as cofactor. The cofactor is Mn(2+).

It carries out the reaction L-seryl-[protein] + ATP = 3-O-(5'-adenylyl)-L-seryl-[protein] + diphosphate. It catalyses the reaction L-threonyl-[protein] + ATP = 3-O-(5'-adenylyl)-L-threonyl-[protein] + diphosphate. The enzyme catalyses L-tyrosyl-[protein] + ATP = O-(5'-adenylyl)-L-tyrosyl-[protein] + diphosphate. The catalysed reaction is L-histidyl-[protein] + UTP = N(tele)-(5'-uridylyl)-L-histidyl-[protein] + diphosphate. It carries out the reaction L-seryl-[protein] + UTP = O-(5'-uridylyl)-L-seryl-[protein] + diphosphate. It catalyses the reaction L-tyrosyl-[protein] + UTP = O-(5'-uridylyl)-L-tyrosyl-[protein] + diphosphate. Functionally, nucleotidyltransferase involved in the post-translational modification of proteins. It can catalyze the addition of adenosine monophosphate (AMP) or uridine monophosphate (UMP) to a protein, resulting in modifications known as AMPylation and UMPylation. The protein is Protein nucleotidyltransferase YdiU of Salmonella enteritidis PT4 (strain P125109).